Here is a 347-residue protein sequence, read N- to C-terminus: NADH-ubiquinone oxidoreductase chain 2 (347 aa).

11 helical membrane passes run 3-23 (PPILIIIMSTVISGTMIVLTS), 25-45 (HWMLTWIGFEMNMLAVIPILM), 59-79 (YFLMQATASMLLMMGITINLL), 96-116 (TLMTIALAMKLGLAPFHFWVP), 122-142 (ISLSSGMILLTWQKIAPLSVL), 153-173 (LLLLMAILSVLIGGWGGLNQT), 178-198 (ILAYSSIAHMGWMSTILIYNP), 200-220 (MMLLNLIIYIMMTLSTFMLFM), 237-257 (MPLITSLILMLMLSLGGLPPL), 274-294 (EMIIMPTFLAITALLNLYFYM), and 325-345 (FLPPLIVMSTMLIPLTPIISI).

It belongs to the complex I subunit 2 family. In terms of assembly, core subunit of respiratory chain NADH dehydrogenase (Complex I) which is composed of 45 different subunits. Interacts with TMEM242.

It is found in the mitochondrion inner membrane. The enzyme catalyses a ubiquinone + NADH + 5 H(+)(in) = a ubiquinol + NAD(+) + 4 H(+)(out). Its function is as follows. Core subunit of the mitochondrial membrane respiratory chain NADH dehydrogenase (Complex I) which catalyzes electron transfer from NADH through the respiratory chain, using ubiquinone as an electron acceptor. Essential for the catalytic activity and assembly of complex I. The protein is NADH-ubiquinone oxidoreductase chain 2 of Paradoxurus hermaphroditus (Asian palm civet).